Here is a 223-residue protein sequence, read N- to C-terminus: Protein Mis18-alpha (223 aa).

The tract at residues 1-30 is disordered; sequence MAGTFSLEPCSTSSSCNHQGKRSESSLLEK. Over residues 9–18 the composition is skewed to polar residues; sequence PCSTSSSCNH. Over residues 21 to 30 the composition is skewed to basic and acidic residues; it reads KRSESSLLEK. Residues Ser33, Ser36, and Ser37 each carry the phosphoserine modification. A Mis18 domain is found at 71–169; sequence PLVFLCTRCR…SVEAVESYTL (99 aa). The Zn(2+) site is built by Cys76, Cys79, Cys132, and Cys135. Lys153 is covalently cross-linked (Glycyl lysine isopeptide (Lys-Gly) (interchain with G-Cter in SUMO2)). At Ser223 the chain carries Phosphoserine.

It belongs to the mis18 family. As to quaternary structure, homodimer, and heterodimer with OIP5/MIS18B. Identified in a complex containing MIS18A, OIP5/MIS18B, MIS18BP1, RBBP7 and RBBP4.

The protein resides in the nucleus. It localises to the chromosome. It is found in the centromere. Required for recruitment of CENPA to centromeres and normal chromosome segregation during mitosis. The polypeptide is Protein Mis18-alpha (Mis18a) (Rattus norvegicus (Rat)).